Reading from the N-terminus, the 352-residue chain is MSQKILFIDRDGTLIEEPKSDFQIDTLEKLRFEKDAIPTLLKLKKFGFKFVMVSNQDGLGTPSFPKENFEIAHEKMLDILKSCGIEFQDIFICPHFENENCACRKPKTAMLEEYIKHELYDKEQSFVIGDRESDMILASNLGVRGLKYGALSWKEIENEILSSFRSASYQRTTKETDIKVKVCLNGGKVSIKTGIDFFDHMLEQIAVHGDIGLEISCKGDLEIDEHHSVEDVALALGACIKKALGDKIGIARYGFTLPMDECLASCAMDFCNRPHLVYKAKFKKSHLGALSTEMIEHFFYSLSYAMGVSLHLKVKGKNDHHKAEGLFKAFAKALKMAVKIESENLASSKGVI.

Residues 1–164 are histidinol-phosphatase; it reads MSQKILFIDR…EIENEILSSF (164 aa). Aspartate 9 functions as the Nucleophile in the catalytic mechanism. Mg(2+) is bound by residues aspartate 9 and aspartate 11. Aspartate 11 acts as the Proton donor in catalysis. Zn(2+) is bound by residues cysteine 93, histidine 95, cysteine 101, and cysteine 103. Aspartate 130 is a Mg(2+) binding site. Residues 165–352 are imidazoleglycerol-phosphate dehydratase; sequence RSASYQRTTK…ENLASSKGVI (188 aa).

The protein in the N-terminal section; belongs to the histidinol-phosphatase family. It in the C-terminal section; belongs to the imidazoleglycerol-phosphate dehydratase family. The cofactor is Mg(2+). Zn(2+) serves as cofactor.

The protein localises to the cytoplasm. It carries out the reaction D-erythro-1-(imidazol-4-yl)glycerol 3-phosphate = 3-(imidazol-4-yl)-2-oxopropyl phosphate + H2O. The catalysed reaction is L-histidinol phosphate + H2O = L-histidinol + phosphate. The protein operates within amino-acid biosynthesis; L-histidine biosynthesis; L-histidine from 5-phospho-alpha-D-ribose 1-diphosphate: step 6/9. It functions in the pathway amino-acid biosynthesis; L-histidine biosynthesis; L-histidine from 5-phospho-alpha-D-ribose 1-diphosphate: step 8/9. The polypeptide is Histidine biosynthesis bifunctional protein HisB (Campylobacter jejuni subsp. doylei (strain ATCC BAA-1458 / RM4099 / 269.97)).